Here is a 242-residue protein sequence, read N- to C-terminus: Myb-related protein MYBAS2 (242 aa).

2 consecutive HTH myb-type domains span residues 5–61 (REEI…HPGL) and 62–112 (KRGR…RKKA). The segment at residues 33–57 (WDFIAKVSGLNRTGKSCRLRWVNYL) is a DNA-binding region (H-T-H motif). A Bipartite nuclear localization signal 1 motif is present at residues 62-65 (KRGR). A DNA-binding region (H-T-H motif) is located at residues 85 to 108 (WSRIARRLPGRTDNEIKNYWRTHM). The short motif at 109-117 (RKKAQERKS) is the Bipartite nuclear localization signal 2 element. A disordered region spans residues 110–133 (KKAQERKSNMSPSSSSSSLTYQSC). Low complexity predominate over residues 118–133 (NMSPSSSSSSLTYQSC).

It localises to the nucleus. Its function is as follows. Transcription factor. The chain is Myb-related protein MYBAS2 (MYBAS2) from Oryza sativa subsp. japonica (Rice).